Consider the following 400-residue polypeptide: Putative F-box protein At1g30920 (400 aa).

In terms of domain architecture, F-box spans 4 to 49 (EENTDSIPIDLILDILSRLPSKSIARCRCVSKLWESMIRQSYFTEL).

The chain is Putative F-box protein At1g30920 from Arabidopsis thaliana (Mouse-ear cress).